Here is a 302-residue protein sequence, read N- to C-terminus: Oligopeptide transport system permease protein OppC (302 aa).

Topologically, residues 1 to 39 (MMLSKKNSETLENFSEKLEVEGRSLWQDARRRFMHNRAA) are cytoplasmic. A helical membrane pass occupies residues 40–62 (VASLIVLFLIALFVTVAPMLSQF). The Periplasmic portion of the chain corresponds to 63 to 102 (TYFDTDWGMMSSAPDMASGHYFGTDSSGRDLLVRVAIGGR). In terms of domain architecture, ABC transmembrane type-1 spans 101–290 (GRISLMVGIA…VTLFCFNFIG (190 aa)). A helical transmembrane segment spans residues 103 to 125 (ISLMVGIAAALVAVIVGTLYGSL). Over 126-137 (SGYLGGKIDSVM) the chain is Cytoplasmic. Residues 138-160 (MRLLEILNSFPFMFFVILLVTFF) form a helical membrane-spanning segment. The Periplasmic portion of the chain corresponds to 161-163 (GQN). Residues 164–183 (ILLIFVAIGMVSWLDMARIV) form a helical membrane-spanning segment. Residues 184 to 213 (RGQTLSLKRKEFIEAAQVGGVSTASIVIRH) are Cytoplasmic-facing. The helical transmembrane segment at 214–236 (IVPNVLGVVVVYASLLVPSMILF) threads the bilayer. Topologically, residues 237–267 (ESFLSFLGLGTQEPLSSWGALLSDGANSMEV) are periplasmic. The helical transmembrane segment at 268–290 (SPWLLLFPAGFLVVTLFCFNFIG) threads the bilayer. Over 291–302 (DGLRDALDPKDR) the chain is Cytoplasmic.

The protein belongs to the binding-protein-dependent transport system permease family. OppBC subfamily. As to quaternary structure, the complex is composed of two ATP-binding proteins (OppD and OppF), two transmembrane proteins (OppB and OppC) and a solute-binding protein (OppA).

Its subcellular location is the cell inner membrane. Its function is as follows. Part of the ABC transporter complex OppABCDF involved in the uptake of oligopeptides, including the cell wall murein tripeptide L-alanyl-gamma-D-glutamyl-meso-diaminopimelate. Responsible for the translocation of the substrate across the membrane. Plays an important nutritional role and is involved in the recycling of cell wall peptides. The protein is Oligopeptide transport system permease protein OppC of Salmonella typhimurium (strain LT2 / SGSC1412 / ATCC 700720).